The chain runs to 186 residues: Peptide deformylase 2 (186 aa).

Positions 104 and 146 each coordinate Fe cation. Glu-147 is a catalytic residue. Position 150 (His-150) interacts with Fe cation.

This sequence belongs to the polypeptide deformylase family. It depends on Fe(2+) as a cofactor.

The enzyme catalyses N-terminal N-formyl-L-methionyl-[peptide] + H2O = N-terminal L-methionyl-[peptide] + formate. Removes the formyl group from the N-terminal Met of newly synthesized proteins. Requires at least a dipeptide for an efficient rate of reaction. N-terminal L-methionine is a prerequisite for activity but the enzyme has broad specificity at other positions. The sequence is that of Peptide deformylase 2 from Streptomyces avermitilis (strain ATCC 31267 / DSM 46492 / JCM 5070 / NBRC 14893 / NCIMB 12804 / NRRL 8165 / MA-4680).